Here is a 133-residue protein sequence, read N- to C-terminus: MILAFDYGTQKIGVASGNELLGTATPLKALPCKNTQPNWDDIAALLKEWEPEALVVGLPLNMDGSDSESTVRARKFANRLHGRFGKKVWLIDERLSTREARERTGIKKADSRVDSMAAVIIAEGFFAGDAKVF.

This sequence belongs to the YqgF nuclease family.

It localises to the cytoplasm. In terms of biological role, could be a nuclease involved in processing of the 5'-end of pre-16S rRNA. The chain is Putative pre-16S rRNA nuclease from Alcanivorax borkumensis (strain ATCC 700651 / DSM 11573 / NCIMB 13689 / SK2).